Reading from the N-terminus, the 1256-residue chain is Putative protein DDB_G0292252 (1256 aa).

4 disordered regions span residues 1 to 53 (MSDD…NNNN), 145 to 243 (LLNG…SISR), 898 to 951 (EQQQ…PVET), and 1069 to 1136 (SHPT…ATIS). A compositionally biased stretch (low complexity) spans 147–214 (NGNNSNNNSN…NGNNINTSNG (68 aa)). The segment covering 222-243 (QTESTEQDFTSTSQNSTPSISR) has biased composition (polar residues). Low complexity-rich tracts occupy residues 898-916 (EQQQ…SNNE) and 925-942 (TTAA…TTTT). Positions 1069 to 1079 (SHPTIQSTSSP) are enriched in polar residues. The span at 1080–1136 (STSSSNNNNSTTTATNNNGNNGNNNNGNGNNNNNNNNNNNNNNNNNNNNNNGPATIS) shows a compositional bias: low complexity.

In Dictyostelium discoideum (Social amoeba), this protein is Putative protein DDB_G0292252.